We begin with the raw amino-acid sequence, 464 residues long: Chaperone SurA (464 aa).

An N-terminal signal peptide occupies residues 1–25; that stretch reads MTRYFSIVLSLLLAVSCVFLPVASA. PpiC domains lie at 175-277 and 292-391; these read GAQY…KLVE and ATEY…QRLG. The interval 439–464 is disordered; that stretch reads PADDHQTPSAAVIPATGAVLPSATKH.

It is found in the periplasm. It catalyses the reaction [protein]-peptidylproline (omega=180) = [protein]-peptidylproline (omega=0). In terms of biological role, chaperone involved in the correct folding and assembly of outer membrane proteins. Recognizes specific patterns of aromatic residues and the orientation of their side chains, which are found more frequently in integral outer membrane proteins. May act in both early periplasmic and late outer membrane-associated steps of protein maturation. This Xylella fastidiosa (strain 9a5c) protein is Chaperone SurA.